Reading from the N-terminus, the 565-residue chain is uncharacterized protein (565 aa).

5 helical membrane-spanning segments follow: residues 4–26 (FVQF…AVWV), 33–55 (GYGL…VGAA), 68–90 (SLLY…VNAL), 97–119 (YAIL…TQFF), and 162–184 (ISAM…IILL). 2 RCK C-terminal domains span residues 210–295 (PNVD…LGPE) and 296–379 (VPDA…IFGV). The next 5 membrane-spanning stretches (helical) occupy residues 389–411 (LLTL…PAFG), 415–432 (GLGN…VSSI), 453–472 (LGLI…DLLT), 482–504 (IFIV…GFHI), and 539–561 (WLGF…YFAM).

Belongs to the AAE transporter (TC 2.A.81) family.

Its subcellular location is the cell membrane. This is an uncharacterized protein from Bordetella parapertussis (strain 12822 / ATCC BAA-587 / NCTC 13253).